We begin with the raw amino-acid sequence, 210 residues long: Small heat shock protein hspG6 (210 aa).

Positions 34-210 (KTIIDKLPPM…YSNTIKININ (177 aa)) constitute a sHSP domain. Positions 93–151 (VIEKSTSSSTLDSKEDEPSIEEFEDDIKPKSKSDNTTVSTTTTATTKENKEDENKTKST) are disordered. Residues 126-138 (DNTTVSTTTTATT) are compositionally biased toward low complexity. Positions 139 to 151 (KENKEDENKTKST) are enriched in basic and acidic residues.

This sequence belongs to the small heat shock protein (HSP20) family.

The chain is Small heat shock protein hspG6 (hspG6) from Dictyostelium discoideum (Social amoeba).